The following is a 147-amino-acid chain: Large ribosomal subunit protein uL11 (147 aa).

It belongs to the universal ribosomal protein uL11 family. Part of the ribosomal stalk of the 50S ribosomal subunit. Interacts with L10 and the large rRNA to form the base of the stalk. L10 forms an elongated spine to which L12 dimers bind in a sequential fashion forming a multimeric L10(L12)X complex. One or more lysine residues are methylated.

Forms part of the ribosomal stalk which helps the ribosome interact with GTP-bound translation factors. The protein is Large ribosomal subunit protein uL11 of Metamycoplasma arthritidis (strain 158L3-1) (Mycoplasma arthritidis).